A 640-amino-acid chain; its full sequence is Pro-neuregulin-1, membrane-bound isoform (640 aa).

Residues 1–19 (MSERKEGRGKGKGKKKERG) constitute a propeptide that is removed on maturation. Positions 1–53 (MSERKEGRGKGKGKKKERGSGKKPESAAGSQSPALPPRLKEMKSQESAAGSKL) are disordered. The Extracellular segment spans residues 20–242 (SGKKPESAAG…EKAEELYQKR (223 aa)). Residues 37–128 (PRLKEMKSQE…GNDSASANIT (92 aa)) enclose the Ig-like C2-type domain. An intrachain disulfide couples C57 to C112. N-linked (GlcNAc...) asparagine glycans are attached at residues N120, N126, and N164. The 45-residue stretch at 178 to 222 (HLVKCAEKEKTFCVNGGECFMVKDLSNPSRYLCKCQPGFTGARCT) folds into the EGF-like domain. 3 cysteine pairs are disulfide-bonded: C182/C196, C190/C210, and C212/C221. A helical membrane pass occupies residues 243–265 (VLTITGICIALLVVGIMCVVAYC). The Cytoplasmic segment spans residues 266 to 640 (KTKKQRKKLH…VIANQDPIAV (375 aa)). Low complexity predominate over residues 334 to 350 (TSHYTSTAHHSTTVTQT). Disordered regions lie at residues 334–360 (TSHY…NGHT), 375–399 (SVEN…GGPR), 433–461 (RMSP…SMTV), and 524–588 (EYET…DTPF). Residues 351–360 (PSHSWSNGHT) show a composition bias toward polar residues. The span at 387 to 397 (GPRGRLNGTGG) shows a compositional bias: gly residues. Residues 542 to 552 (ANSRRAKRTKP) are compositionally biased toward basic residues. Low complexity predominate over residues 563-574 (DSNTSSQSSNSE).

Belongs to the neuregulin family. The cytoplasmic domain interacts with the LIM domain region of LIMK1. Forms a ternary complex with ERBB3 and ITGAV:ITGB3 or ITGA6:ITGB4. Interacts with NRDC and BACE1. Post-translationally, proteolytic cleavage close to the plasma membrane on the external face leads to the release of the soluble growth factor form. N- and O-glycosylated. Extensive glycosylation precedes the proteolytic cleavage. Type I isoforms are the predominant forms expressed in the endocardium. Isoform alpha is expressed in breast, ovary, testis, prostate, heart, skeletal muscle, lung, placenta liver, kidney, salivary gland, small intestine and brain, but not in uterus, stomach, pancreas, and spleen. Isoform 3 is the predominant form in mesenchymal cells and in non-neuronal organs, whereas isoform 6 is the major neuronal form. Isoform 8 is expressed in spinal cord and brain. Isoform 9 is the major form in skeletal muscle cells; in the nervous system it is expressed in spinal cord and brain. Also detected in adult heart, placenta, lung, liver, kidney, and pancreas. Isoform 10 is expressed in nervous system: spinal cord motor neurons, dorsal root ganglion neurons, and brain. Predominant isoform expressed in sensory and motor neurons. Not detected in adult heart, placenta, lung, liver, skeletal muscle, kidney, and pancreas. Not expressed in fetal lung, liver and kidney. Type IV isoforms are brain-specific.

It is found in the cell membrane. The protein localises to the secreted. Its subcellular location is the nucleus. The protein resides in the membrane. In terms of biological role, direct ligand for ERBB3 and ERBB4 tyrosine kinase receptors. Concomitantly recruits ERBB1 and ERBB2 coreceptors, resulting in ligand-stimulated tyrosine phosphorylation and activation of the ERBB receptors. The multiple isoforms perform diverse functions such as inducing growth and differentiation of epithelial, glial, neuronal, and skeletal muscle cells; inducing expression of acetylcholine receptor in synaptic vesicles during the formation of the neuromuscular junction; stimulating lobuloalveolar budding and milk production in the mammary gland and inducing differentiation of mammary tumor cells; stimulating Schwann cell proliferation; implication in the development of the myocardium such as trabeculation of the developing heart. Isoform 10 may play a role in motor and sensory neuron development. Binds to ERBB4. Binds to ERBB3. Acts as a ligand for integrins and binds (via EGF domain) to integrins ITGAV:ITGB3 or ITGA6:ITGB4. Its binding to integrins and subsequent ternary complex formation with integrins and ERRB3 are essential for NRG1-ERBB signaling. Induces the phosphorylation and activation of MAPK3/ERK1, MAPK1/ERK2 and AKT1. Ligand-dependent ERBB4 endocytosis is essential for the NRG1-mediated activation of these kinases in neurons. This chain is Pro-neuregulin-1, membrane-bound isoform (NRG1), found in Homo sapiens (Human).